The sequence spans 436 residues: Glutamate-1-semialdehyde 2,1-aminomutase (436 aa).

Position 269 is an N6-(pyridoxal phosphate)lysine (lysine 269).

Belongs to the class-III pyridoxal-phosphate-dependent aminotransferase family. HemL subfamily. As to quaternary structure, homodimer. Pyridoxal 5'-phosphate serves as cofactor.

It localises to the cytoplasm. It carries out the reaction (S)-4-amino-5-oxopentanoate = 5-aminolevulinate. The protein operates within porphyrin-containing compound metabolism; protoporphyrin-IX biosynthesis; 5-aminolevulinate from L-glutamyl-tRNA(Glu): step 2/2. It participates in porphyrin-containing compound metabolism; chlorophyll biosynthesis. In Heliobacterium modesticaldum (strain ATCC 51547 / Ice1), this protein is Glutamate-1-semialdehyde 2,1-aminomutase.